The following is an 82-amino-acid chain: MGFYMLLTVALLLTSLMNVEATPVDQAERSALEKSGLGNRIQPRYDNCGDAEADCYQSKCMDGETYDEECEASCNYVVANCI.

An N-terminal signal peptide occupies residues 1-21 (MGFYMLLTVALLLTSLMNVEA). Positions 22 to 39 (TPVDQAERSALEKSGLGN) are excised as a propeptide. Intrachain disulfides connect C48–C70, C55–C74, and C60–C81.

In terms of tissue distribution, expressed by the venom duct.

Its subcellular location is the secreted. The sequence is that of Turripeptide IX-04 from Gemmula speciosa (Splendid gem-turris).